Consider the following 106-residue polypeptide: Cell division protein FtsB (106 aa).

The Cytoplasmic portion of the chain corresponds to 1 to 3 (MGK). Residues 4 to 21 (LTLLLLVLLGWLQYSLWL) form a helical membrane-spanning segment. The Periplasmic portion of the chain corresponds to 22-106 (GKNGIHDYVR…SRPSTPNNTQ (85 aa)). Positions 29-70 (YVRVKNDVAMQERNNSKLKARNDQLSAEIDDLTGGQEAIEER) form a coiled coil.

This sequence belongs to the FtsB family. In terms of assembly, part of a complex composed of FtsB, FtsL and FtsQ.

It localises to the cell inner membrane. Its function is as follows. Essential cell division protein. May link together the upstream cell division proteins, which are predominantly cytoplasmic, with the downstream cell division proteins, which are predominantly periplasmic. This Photorhabdus laumondii subsp. laumondii (strain DSM 15139 / CIP 105565 / TT01) (Photorhabdus luminescens subsp. laumondii) protein is Cell division protein FtsB.